The chain runs to 153 residues: Large ribosomal subunit protein uL23m (153 aa).

The interval 110 to 153 (IFPEKDKKSKEGSVEEMHEKFMEDERQRQKPDPRRGGVTEWFGL) is disordered. A compositionally biased stretch (basic and acidic residues) spans 111–146 (FPEKDKKSKEGSVEEMHEKFMEDERQRQKPDPRRGG).

This sequence belongs to the universal ribosomal protein uL23 family. Component of the mitochondrial ribosome large subunit (39S) which comprises a 16S rRNA and about 50 distinct proteins.

The protein localises to the mitochondrion. This is Large ribosomal subunit protein uL23m (mrpl23) from Danio rerio (Zebrafish).